The chain runs to 235 residues: Octanoyltransferase (235 aa).

A BPL/LPL catalytic domain is found at 59-235; the sequence is PGSSQAVWLL…KKSLTERFGL (177 aa). Residues 101–108, 168–170, and 181–183 each bind substrate; these read RGGEVTHH, SIG, and GLS. Cysteine 199 functions as the Acyl-thioester intermediate in the catalytic mechanism.

The protein belongs to the LipB family.

It is found in the cytoplasm. It catalyses the reaction octanoyl-[ACP] + L-lysyl-[protein] = N(6)-octanoyl-L-lysyl-[protein] + holo-[ACP] + H(+). It participates in protein modification; protein lipoylation via endogenous pathway; protein N(6)-(lipoyl)lysine from octanoyl-[acyl-carrier-protein]: step 1/2. In terms of biological role, catalyzes the transfer of endogenously produced octanoic acid from octanoyl-acyl-carrier-protein onto the lipoyl domains of lipoate-dependent enzymes. Lipoyl-ACP can also act as a substrate although octanoyl-ACP is likely to be the physiological substrate. This chain is Octanoyltransferase, found in Prochlorococcus marinus (strain MIT 9211).